The following is a 790-amino-acid chain: Phenylalanine--tRNA ligase beta subunit (790 aa).

The tRNA-binding domain occupies 40–149 (AEKVSGVVVG…IDAPVGTDIN (110 aa)). The 78-residue stretch at 402 to 479 (NKQIKINLSI…RIYGYSKLPE (78 aa)) folds into the B5 domain. Positions 457, 463, 466, and 467 each coordinate Mg(2+). An FDX-ACB domain is found at 698–789 (SKYPSVSRDI…LKTKFNIEQR (92 aa)).

Belongs to the phenylalanyl-tRNA synthetase beta subunit family. Type 1 subfamily. In terms of assembly, tetramer of two alpha and two beta subunits. The cofactor is Mg(2+).

The protein localises to the cytoplasm. The catalysed reaction is tRNA(Phe) + L-phenylalanine + ATP = L-phenylalanyl-tRNA(Phe) + AMP + diphosphate + H(+). The sequence is that of Phenylalanine--tRNA ligase beta subunit from Francisella tularensis subsp. tularensis (strain SCHU S4 / Schu 4).